The sequence spans 77 residues: Acyl carrier protein (77 aa).

A Carrier domain is found at 2 to 77 (SSIEKRVKEI…DAIDYITEHT (76 aa)). Ser-37 is modified (O-(pantetheine 4'-phosphoryl)serine).

Belongs to the acyl carrier protein (ACP) family. In terms of processing, 4'-phosphopantetheine is transferred from CoA to a specific serine of apo-ACP by AcpS. This modification is essential for activity because fatty acids are bound in thioester linkage to the sulfhydryl of the prosthetic group.

The protein localises to the cytoplasm. It participates in lipid metabolism; fatty acid biosynthesis. In terms of biological role, carrier of the growing fatty acid chain in fatty acid biosynthesis. The sequence is that of Acyl carrier protein from Geobacter sulfurreducens (strain ATCC 51573 / DSM 12127 / PCA).